Reading from the N-terminus, the 38-residue chain is Potassium channel toxin alpha-KTx 2.13 (38 aa).

3 cysteine pairs are disulfide-bonded: Cys-7-Cys-29, Cys-13-Cys-34, and Cys-17-Cys-36.

This sequence belongs to the short scorpion toxin superfamily. Potassium channel inhibitor family. Alpha-KTx 02 subfamily. In terms of tissue distribution, expressed by the venom gland.

Its subcellular location is the secreted. Selective inhibitor of voltage-gated potassium channels, blocks the Kv1.2/KCNA2 (Kd=1.3 nM) and Kv1.3/KCNA3 (Kd=7.2 nM) channels. Association and dissociation rates of the toxin are slower for Kv1.2/KCNA2 than for Kv1.3/KCNA3. The protein is Potassium channel toxin alpha-KTx 2.13 of Centruroides suffusus (Durango bark scorpion).